Here is a 290-residue protein sequence, read N- to C-terminus: Arylamine N-acetyltransferase 1 (290 aa).

Met-1 is subject to N-acetylmethionine. Residue Cys-68 is the Acyl-thioester intermediate of the active site. Ser-103 is a binding site for CoA. 106 to 107 (IH) serves as a coordination point for substrate. Active-site residues include His-107 and Asp-122. Residues Tyr-208 and Ser-287 each contribute to the CoA site.

It belongs to the arylamine N-acetyltransferase family.

It is found in the cytoplasm. It carries out the reaction an arylamine + acetyl-CoA = an N-acetylarylamine + CoA. In terms of biological role, participates in the detoxification of a plethora of hydrazine and arylamine drugs. In Mesocricetus auratus (Golden hamster), this protein is Arylamine N-acetyltransferase 1 (NAT1).